The sequence spans 178 residues: Translation initiation factor IF-3 (178 aa).

The interval 1–20 (MRRPFRATPVQKDGPRSNRD) is disordered.

It belongs to the IF-3 family. Monomer.

The protein resides in the cytoplasm. IF-3 binds to the 30S ribosomal subunit and shifts the equilibrium between 70S ribosomes and their 50S and 30S subunits in favor of the free subunits, thus enhancing the availability of 30S subunits on which protein synthesis initiation begins. This Brucella abortus biovar 1 (strain 9-941) protein is Translation initiation factor IF-3.